We begin with the raw amino-acid sequence, 273 residues long: Formamidopyrimidine-DNA glycosylase (273 aa).

Proline 2 (schiff-base intermediate with DNA) is an active-site residue. Glutamate 3 serves as the catalytic Proton donor. Catalysis depends on lysine 57, which acts as the Proton donor; for beta-elimination activity. 3 residues coordinate DNA: histidine 91, arginine 110, and lysine 151. The segment at 236–270 (QVYGRKGEACNDCGTIIEAKVIGQRNSYFCPHCQI) adopts an FPG-type zinc-finger fold. The active-site Proton donor; for delta-elimination activity is the arginine 260.

This sequence belongs to the FPG family. Monomer. The cofactor is Zn(2+).

It carries out the reaction Hydrolysis of DNA containing ring-opened 7-methylguanine residues, releasing 2,6-diamino-4-hydroxy-5-(N-methyl)formamidopyrimidine.. The enzyme catalyses 2'-deoxyribonucleotide-(2'-deoxyribose 5'-phosphate)-2'-deoxyribonucleotide-DNA = a 3'-end 2'-deoxyribonucleotide-(2,3-dehydro-2,3-deoxyribose 5'-phosphate)-DNA + a 5'-end 5'-phospho-2'-deoxyribonucleoside-DNA + H(+). In terms of biological role, involved in base excision repair of DNA damaged by oxidation or by mutagenic agents. Acts as a DNA glycosylase that recognizes and removes damaged bases. Has a preference for oxidized purines, such as 7,8-dihydro-8-oxoguanine (8-oxoG). Has AP (apurinic/apyrimidinic) lyase activity and introduces nicks in the DNA strand. Cleaves the DNA backbone by beta-delta elimination to generate a single-strand break at the site of the removed base with both 3'- and 5'-phosphates. The sequence is that of Formamidopyrimidine-DNA glycosylase from Actinobacillus pleuropneumoniae serotype 7 (strain AP76).